A 156-amino-acid polypeptide reads, in one-letter code: Phosphopantetheine adenylyltransferase (156 aa).

S9 contributes to the substrate binding site. ATP is bound by residues 9–10 and H17; that span reads SF. The substrate site is built by K41, I74, and K88. Residues 89–91, E99, and 123–129 each bind ATP; these read GLR and LLHVSSS.

This sequence belongs to the bacterial CoaD family. Homohexamer. It depends on Mg(2+) as a cofactor.

The protein localises to the cytoplasm. The enzyme catalyses (R)-4'-phosphopantetheine + ATP + H(+) = 3'-dephospho-CoA + diphosphate. Its pathway is cofactor biosynthesis; coenzyme A biosynthesis; CoA from (R)-pantothenate: step 4/5. Its function is as follows. Reversibly transfers an adenylyl group from ATP to 4'-phosphopantetheine, yielding dephospho-CoA (dPCoA) and pyrophosphate. The sequence is that of Phosphopantetheine adenylyltransferase from Kocuria rhizophila (strain ATCC 9341 / DSM 348 / NBRC 103217 / DC2201).